A 562-amino-acid chain; its full sequence is Adenylate kinase isoenzyme 5 (562 aa).

Adenylate kinase regions lie at residues 133-316 (KIIL…MAVD) and 377-559 (KIIF…TAID). Residue 142–147 (GSGKGT) coordinates ATP. An NMP 1 region spans residues 162-193 (SVGELLRKKIHSTSSNRKWSLIAKIITTGELA). Residues Arg168, 191–193 (ELA), 219–222 (GFPR), and Gln226 contribute to the AMP site. The interval 256–266 (KRAEQQGRPDD) is LID 1. An ATP-binding site is contributed by Arg257. AMP contacts are provided by Arg263 and Arg274. 386-391 (GSGKGT) contributes to the ATP binding site. Positions 406-435 (STDELLQNELSSESGRSKLIRDIMERGELV) are NMP 2. Residues Thr407, 433-435 (ELV), 462-465 (GYPR), and Gln469 contribute to the AMP site. Residues 499-509 (QRSRNSPQADD) form an LID 2 region. Arg500 contacts ATP. Arg517 lines the AMP pocket. ATP is bound at residue Gly545.

It belongs to the adenylate kinase family. In terms of assembly, monomer.

Its subcellular location is the cytoplasm. The catalysed reaction is AMP + ATP = 2 ADP. The enzyme catalyses a 2'-deoxyribonucleoside 5'-diphosphate + ATP = a 2'-deoxyribonucleoside 5'-triphosphate + ADP. It carries out the reaction a ribonucleoside 5'-diphosphate + ATP = a ribonucleoside 5'-triphosphate + ADP. In terms of biological role, nucleoside monophosphate (NMP) kinase that catalyzes the reversible transfer of the terminal phosphate group between nucleoside triphosphates and monophosphates. Active on AMP and dAMP with ATP as a donor. When GTP is used as phosphate donor, the enzyme phosphorylates AMP, CMP, and to a small extent dCMP. Also displays broad nucleoside diphosphate kinase activity. This chain is Adenylate kinase isoenzyme 5 (Ak5), found in Bos taurus (Bovine).